The sequence spans 471 residues: A-type ATP synthase subunit B (471 aa).

Belongs to the ATPase alpha/beta chains family. In terms of assembly, has multiple subunits with at least A(3), B(3), C, D, E, F, H, I and proteolipid K(x).

Its subcellular location is the cell membrane. Its function is as follows. Component of the A-type ATP synthase that produces ATP from ADP in the presence of a proton gradient across the membrane. The B chain is a regulatory subunit. This Ignicoccus hospitalis (strain KIN4/I / DSM 18386 / JCM 14125) protein is A-type ATP synthase subunit B.